The chain runs to 345 residues: Phosphate acyltransferase (345 aa).

The protein belongs to the PlsX family. In terms of assembly, homodimer. Probably interacts with PlsY.

It localises to the cytoplasm. It carries out the reaction a fatty acyl-[ACP] + phosphate = an acyl phosphate + holo-[ACP]. The protein operates within lipid metabolism; phospholipid metabolism. Catalyzes the reversible formation of acyl-phosphate (acyl-PO(4)) from acyl-[acyl-carrier-protein] (acyl-ACP). This enzyme utilizes acyl-ACP as fatty acyl donor, but not acyl-CoA. In Wolbachia sp. subsp. Drosophila simulans (strain wRi), this protein is Phosphate acyltransferase.